A 431-amino-acid chain; its full sequence is Enolase (431 aa).

Gln167 contributes to the (2R)-2-phosphoglycerate binding site. Glu209 acts as the Proton donor in catalysis. 3 residues coordinate Mg(2+): Asp246, Glu289, and Asp316. (2R)-2-phosphoglycerate contacts are provided by Lys341, Arg370, Ser371, and Lys392. Residue Lys341 is the Proton acceptor of the active site.

Belongs to the enolase family. Component of the RNA degradosome, a multiprotein complex involved in RNA processing and mRNA degradation. Mg(2+) serves as cofactor.

It localises to the cytoplasm. The protein localises to the secreted. The protein resides in the cell surface. The catalysed reaction is (2R)-2-phosphoglycerate = phosphoenolpyruvate + H2O. The protein operates within carbohydrate degradation; glycolysis; pyruvate from D-glyceraldehyde 3-phosphate: step 4/5. Its function is as follows. Catalyzes the reversible conversion of 2-phosphoglycerate (2-PG) into phosphoenolpyruvate (PEP). It is essential for the degradation of carbohydrates via glycolysis. This is Enolase from Marinobacter nauticus (strain ATCC 700491 / DSM 11845 / VT8) (Marinobacter aquaeolei).